Reading from the N-terminus, the 165-residue chain is UPF0303 protein Bcenmc03_1534 (165 aa).

Belongs to the UPF0303 family.

The sequence is that of UPF0303 protein Bcenmc03_1534 from Burkholderia orbicola (strain MC0-3).